A 1017-amino-acid polypeptide reads, in one-letter code: Sodium/potassium-transporting ATPase subunit alpha-2 (1017 aa).

The tract at residues 1-31 (MDGREYSPAATTSENGGGRRKQKEKELDELK) is disordered. Over 1-82 (MDGREYSPAA…NALTPPPTTP (82 aa)) the chain is Cytoplasmic. The interval 77-79 (PPP) is interaction with phosphoinositide-3 kinase. A helical transmembrane segment spans residues 83–103 (EWVKFCRQLFGGFSILLWIGA). The Extracellular segment spans residues 104–126 (ILCFLAYGIQAAMEDEPSNDNLY). A helical transmembrane segment spans residues 127 to 147 (LGVVLAAVVIVTGCFSYYQEA). The Cytoplasmic segment spans residues 148 to 283 (KSSKIMDSFK…VGRTPIAMEI (136 aa)). The segment at 207 to 228 (KVDNSSLTGESEPQTRSPEFTH) is disordered. A compositionally biased stretch (polar residues) spans 209–224 (DNSSLTGESEPQTRSP). Residues 284–303 (EHFIRLITGVAVFLGLSFFI) form a helical membrane-spanning segment. Residues 304–315 (LSLILGYTWLEA) lie on the Extracellular side of the membrane. The chain crosses the membrane as a helical span at residues 316 to 333 (VIFLIGIIVANVPEGLLA). At 334-766 (TVTVCLTLTA…EEGRLIFDNL (433 aa)) the chain is on the cytoplasmic side. Aspartate 371 (4-aspartylphosphate intermediate) is an active-site residue. Residue lysine 502 coordinates ATP. Residues aspartate 711 and aspartate 715 each contribute to the Mg(2+) site. A helical membrane pass occupies residues 767–786 (KKSIAYTLTSNIPEITPFLL). Residues 787-796 (FIIANIPLPL) lie on the Extracellular side of the membrane. A helical transmembrane segment spans residues 797-817 (GTVTILCIDLGTDMVPAISLA). Residues 818 to 837 (YEAAESDIMKRQPRNPRTDK) are Cytoplasmic-facing. Residues 838-860 (LVNERLISMAYGQIGMIQALGGF) traverse the membrane as a helical segment. Residues 861 to 912 (FTYFVILAENGFLPARLLGVRLAWDDRSTNDLEDSYGQEWTYEQRKVVEFTC) are Extracellular-facing. A helical membrane pass occupies residues 913 to 932 (HTAFFASIVVVQWADLIICK). Residues 933-945 (TRRNSVFQQGMKN) lie on the Cytoplasmic side of the membrane. The residue at position 937 (serine 937) is a Phosphoserine; by PKA. Residues 946 to 964 (KILIFGLLEETALAAFLSY) form a helical membrane-spanning segment. Residues 965–979 (CPGMGVALRMYPLKV) lie on the Extracellular side of the membrane. The helical transmembrane segment at 980–1000 (TWWFCAFPYSLLIFAYDEVRK) threads the bilayer. At 1001–1017 (LILRRYPGGWVEKETYY) the chain is on the cytoplasmic side.

This sequence belongs to the cation transport ATPase (P-type) (TC 3.A.3) family. Type IIC subfamily. The sodium/potassium-transporting ATPase is composed of a catalytic alpha subunit, an auxiliary non-catalytic beta subunit and an additional regulatory subunit.

It localises to the membrane. It is found in the cell membrane. It catalyses the reaction K(+)(out) + Na(+)(in) + ATP + H2O = K(+)(in) + Na(+)(out) + ADP + phosphate + H(+). Its function is as follows. This is the catalytic component of the active enzyme, which catalyzes the hydrolysis of ATP coupled with the exchange of sodium and potassium ions across the plasma membrane. This action creates the electrochemical gradient of sodium and potassium ions, providing the energy for active transport of various nutrients. The protein is Sodium/potassium-transporting ATPase subunit alpha-2 (ATP1A2) of Gallus gallus (Chicken).